Consider the following 511-residue polypeptide: Cytochrome P450 93B2 (511 aa).

The chain crosses the membrane as a helical span at residues Leu4–Tyr24. Position 447 (Cys447) interacts with heme.

The protein belongs to the cytochrome P450 family. Heme serves as cofactor.

The protein localises to the membrane. The catalysed reaction is a flavanone + reduced [NADPH--hemoprotein reductase] + O2 = a flavone + oxidized [NADPH--hemoprotein reductase] + 2 H2O + H(+). It functions in the pathway secondary metabolite biosynthesis; flavonoid biosynthesis. Functions as a flavone synthase II (FNSII) that catalyzes the direct conversion of flavanones to flavones. In vitro, can convert liquiritigenin, naringenin and eriodictyol to 7,4'-dihydroxyflavone, apigenin and luteolin, respectively. This Gerbera hybrida (Daisy) protein is Cytochrome P450 93B2.